Here is a 220-residue protein sequence, read N- to C-terminus: MIKWLARPADYGSVWDAMKAFTAARGPGTADEIWLCEHAPVYTLGQAGRPEHLLNPGLIPVVHCDRGGQVTYHGPGQVLAYTLFDLRRAGLYVREYVDMLEQATLATLRELGLEQACRKPGAPGIYVPQPGGELAKIAALGVKVRNGYAYHGLALNIDMDLSPFLGINPCGYEGLRTVDLAACGVRTSVERAGELLAAQLARAHGQAVQQRAAALAGVPG.

The region spanning P27–V208 is the BPL/LPL catalytic domain. Residues R66 to H73, A139 to G141, and G152 to A154 contribute to the substrate site. Catalysis depends on C170, which acts as the Acyl-thioester intermediate.

It belongs to the LipB family.

It localises to the cytoplasm. It carries out the reaction octanoyl-[ACP] + L-lysyl-[protein] = N(6)-octanoyl-L-lysyl-[protein] + holo-[ACP] + H(+). The protein operates within protein modification; protein lipoylation via endogenous pathway; protein N(6)-(lipoyl)lysine from octanoyl-[acyl-carrier-protein]: step 1/2. Its function is as follows. Catalyzes the transfer of endogenously produced octanoic acid from octanoyl-acyl-carrier-protein onto the lipoyl domains of lipoate-dependent enzymes. Lipoyl-ACP can also act as a substrate although octanoyl-ACP is likely to be the physiological substrate. The protein is Octanoyltransferase of Bordetella bronchiseptica (strain ATCC BAA-588 / NCTC 13252 / RB50) (Alcaligenes bronchisepticus).